Reading from the N-terminus, the 548-residue chain is Flagellin (548 aa).

The protein belongs to the bacterial flagellin family.

The protein localises to the secreted. It localises to the bacterial flagellum. Its function is as follows. Flagellin is the subunit protein which polymerizes to form the filaments of bacterial flagella. The chain is Flagellin (fliC) from Escherichia coli O127:H6 (strain E2348/69 / EPEC).